Here is an 874-residue protein sequence, read N- to C-terminus: Alanine--tRNA ligase (874 aa).

H564, H568, C665, and H669 together coordinate Zn(2+).

Belongs to the class-II aminoacyl-tRNA synthetase family. The cofactor is Zn(2+).

The protein localises to the cytoplasm. The catalysed reaction is tRNA(Ala) + L-alanine + ATP = L-alanyl-tRNA(Ala) + AMP + diphosphate. Functionally, catalyzes the attachment of alanine to tRNA(Ala) in a two-step reaction: alanine is first activated by ATP to form Ala-AMP and then transferred to the acceptor end of tRNA(Ala). Also edits incorrectly charged Ser-tRNA(Ala) and Gly-tRNA(Ala) via its editing domain. The chain is Alanine--tRNA ligase from Burkholderia pseudomallei (strain 668).